Consider the following 138-residue polypeptide: Acidic phospholipase A2 Cvv-E6e (138 aa).

A signal peptide spans 1-16 (MRTLWILAVLLLGVEG). 7 cysteine pairs are disulfide-bonded: Cys42–Cys131, Cys44–Cys60, Cys59–Cys111, Cys65–Cys138, Cys66–Cys104, Cys73–Cys97, and Cys91–Cys102. 3 residues coordinate Ca(2+): Tyr43, Gly45, and Gly47. His63 is a catalytic residue. Asp64 contributes to the Ca(2+) binding site. Asp105 is an active-site residue.

Ca(2+) serves as cofactor. Expressed by the venom gland.

Its subcellular location is the secreted. The enzyme catalyses a 1,2-diacyl-sn-glycero-3-phosphocholine + H2O = a 1-acyl-sn-glycero-3-phosphocholine + a fatty acid + H(+). In terms of biological role, snake venom phospholipase A2 (PLA2) that significantly inhibits ADP-induced platelet aggregation in platelet-rich plasma of human, rabbit and guinea pig. PLA2 catalyzes the calcium-dependent hydrolysis of the 2-acyl groups in 3-sn-phosphoglycerides. The polypeptide is Acidic phospholipase A2 Cvv-E6e (Crotalus viridis viridis (Prairie rattlesnake)).